A 210-amino-acid chain; its full sequence is Two-component response regulator ORR7 (210 aa).

The disordered stretch occupies residues 53 to 92 (VVPLHDNASAEDDDDDEEDDDEDDDDDDDEDDEEEAAPPY). Over residues 61–88 (SAEDDDDDEEDDDEDDDDDDDEDDEEEA) the composition is skewed to acidic residues. The region spanning 92–205 (YVMAVDDSSV…VRPADISRIT (114 aa)) is the Response regulatory domain. At D142 the chain carries 4-aspartylphosphate.

The protein belongs to the ARR family. Type-A subfamily. Two-component system major event consists of a His-to-Asp phosphorelay between a sensor histidine kinase (HK) and a response regulator (RR). In plants, the His-to-Asp phosphorelay involves an additional intermediate named Histidine-containing phosphotransfer protein (HPt). This multistep phosphorelay consists of a His-Asp-His-Asp sequential transfer of a phosphate group between first a His and an Asp of the HK protein, followed by the transfer to a conserved His of the HPt protein and finally the transfer to an Asp in the receiver domain of the RR protein.

Functions as a response regulator involved in His-to-Asp phosphorelay signal transduction system. Phosphorylation of the Asp residue in the receiver domain activates the ability of the protein to promote the transcription of target genes. Type-A response regulators seem to act as negative regulators of the cytokinin signaling. The chain is Two-component response regulator ORR7 from Oryza sativa subsp. japonica (Rice).